The chain runs to 412 residues: MTESTTDPARQNLDPTSPAPATSFPQDRGCPYHPPAGYAPLREGRPLSRVTLFDGRPVWAVTGHALARRLLADPRLSTDRSHPDFPVPAERFAGAQRRRVALLGVDDPEHNTQRRMLIPTFSVKRIGALRPRIQETVDRLLDAMERQGPPAELVSAFALPVPSMVICALLGVPYADHAFFEERSQRLLRGPGADDVNRARDELEEYLGALIDRKRAEPGDGLLDELIHRDHPDGPVDREQLVAFAVILLIAGHETTANMISLGTFTLLSHPEQLAALRAGGTSTAVVVEELLRFLSIAEGLQRLATEDMEVDGATIRKGEGVVFSTSLINRDADVFPRAETLDWDRPARHHLAFGFGVHQCLGQNLARAELDIAMRTLFERLPGLRLAVPAHEIRHKPGDTIQGLLDLPVAW.

Polar residues predominate over residues 1–25 (MTESTTDPARQNLDPTSPAPATSFP). The tract at residues 1–38 (MTESTTDPARQNLDPTSPAPATSFPQDRGCPYHPPAGY) is disordered. Cys-361 is a binding site for heme.

This sequence belongs to the cytochrome P450 family. It depends on heme as a cofactor.

The protein resides in the cytoplasm. This is Cytochrome P450-SOY (cyp105D1) from Streptomyces griseus.